The sequence spans 819 residues: Protein kinase C-binding protein NELL2 (819 aa).

The signal sequence occupies residues 1 to 24 (MHAMESRVLLRTFCVILGLGAVWG). N-linked (GlcNAc...) asparagine glycosylation is found at N56, N228, N296, and N301. The Laminin G-like domain occupies 67 to 231 (PRSIKASTAT…AQCPDLNRTC (165 aa)). Positions 275-334 (RTCTVKGTTYRESESWTDGCKNCTCLNGTIQCETLVCPAPDCPPKSAPAYVDGKCCKECK) constitute a VWFC 1 domain. The 43-residue stretch at 400–442 (GYDFCSEKHTCMENSVCRNLNDRAVCSCRDGFRALREDNAYCE) folds into the EGF-like 1 domain. 3 disulfides stabilise this stretch: C404–C416, C410–C425, and C427–C441. Residues D443, I444, and E446 each coordinate Ca(2+). The region spanning 443–484 (DIDECAEGRHYCRENTMCVNTPGSFMCICKTGYIRIDDYSCT) is the EGF-like 2; calcium-binding domain. Disulfide bonds link C447-C460, C454-C469, C471-C483, C489-C502, C496-C511, C513-C524, C528-C538, C532-C544, and C546-C555. Ca(2+) contacts are provided by N462, T463, and S466. The EGF-like 3; calcium-binding domain maps to 485 to 525 (EHDECLTNQHNCDENALCFNTVGGHNCVCKPGYTGNGTTCK). An N-linked (GlcNAc...) asparagine glycan is attached at N520. The EGF-like 4 domain maps to 526-556 (AFCKDGCRNGGACIAANVCACPQGFTGPSCE). T551 carries an O-linked (GlcNAc...) threonine glycan. Ca(2+) is bound by residues D558, I559, and E561. The EGF-like 5; calcium-binding domain maps to 558-604 (DIDECSEGFVQCDSRANCINLPGWYHCECRDGYHDNGMFAPGGESCE). Disulfide bonds link C562/C575, C569/C584, and C586/C603. N577, L578, and W581 together coordinate Ca(2+). Residues D605, I606, and E608 each coordinate Ca(2+). The 36-residue stretch at 605–640 (DIDECGTGRHSCTNDTICFNLDGGYDCRCPHGKNCT) folds into the EGF-like 6; calcium-binding domain. Disulfide bonds link C609–C622, C616–C631, and C633–C639. Residue N618 is glycosylated (N-linked (GlcNAc...) asparagine). Positions 624, 625, and 628 each coordinate Ca(2+). The N-linked (GlcNAc...) asparagine glycan is linked to N638. The 59-residue stretch at 701–759 (SQCLHQNGETVYNSGDTWVQDCRQCRCLQGEVDCWPLACPEVECEFSVLPENECCPRCV) folds into the VWFC 2 domain.

As to quaternary structure, homotrimer. Interacts with NICOL1; this interaction triggers epididymal differentiation. Interacts (via EGF domains) with ROBO3 (via FN domains); binding to ROBO3 induces repulsive guidance cue for commissural axons. As to expression, expressed in brain and testis but not in epididymis. Expressed in regions flanking the commissural axon trajectory, including the ventral horn.

It is found in the secreted. In terms of biological role, plays multiple roles in neural tissues, regulates neuronal proliferation, survival, differentiation, polarization, as well as axon guidance and synaptic functions. Plays an important role in axon development during neuronal differentiation through the MAPK intracellular signaling pathway. Via binding to its receptor ROBO3, plays a role in axon guidance, functioning as a repulsive axon guidance cue that contributes to commissural axon guidance to the midline. Required for neuron survival through the modulation of MAPK signaling pathways too. Involved in the regulation of hypothalamic GNRH secretion and the control of puberty. Epididymal-secreted protein that signals through a ROS1-pathway to regulate the epididymal initial segment (IS) maturation, sperm maturation and male fertility. The polypeptide is Protein kinase C-binding protein NELL2 (Mus musculus (Mouse)).